The primary structure comprises 79 residues: Probable Fe(2+)-trafficking protein (79 aa).

It belongs to the Fe(2+)-trafficking protein family. As to quaternary structure, monomer.

Functionally, could be a mediator in iron transactions between iron acquisition and iron-requiring processes, such as synthesis and/or repair of Fe-S clusters in biosynthetic enzymes. The polypeptide is Probable Fe(2+)-trafficking protein (Blochmanniella floridana).